The chain runs to 54 residues: Protein hunchback (54 aa).

3 consecutive C2H2-type zinc fingers follow at residues R1–H3, F9–H31, and Y37–L54.

This sequence belongs to the hunchback C2H2-type zinc-finger protein family.

It is found in the nucleus. Functionally, gap class segmentation protein that controls development of head structures. This chain is Protein hunchback (hb), found in Calliphora vicina (Blue blowfly).